A 109-amino-acid polypeptide reads, in one-letter code: Resistin (109 aa).

The N-terminal stretch at 1–18 (MKALSFLFIPVLGLLVCG) is a signal peptide. Intrachain disulfides connect cysteine 51-cysteine 104, cysteine 63-cysteine 103, cysteine 72-cysteine 89, cysteine 74-cysteine 91, and cysteine 78-cysteine 93.

The protein belongs to the resistin/FIZZ family. Homodimer; disulfide-linked.

The protein localises to the secreted. Functionally, hormone that seems to suppress insulin ability to stimulate glucose uptake into adipose cells. Potentially links obesity to diabetes. This chain is Resistin (RETN), found in Bos taurus (Bovine).